We begin with the raw amino-acid sequence, 133 residues long: Transcriptional regulator MraZ (133 aa).

SpoVT-AbrB domains are found at residues 5–47 (TYEH…SKDD) and 76–119 (TVEI…SKNK).

It belongs to the MraZ family. As to quaternary structure, forms oligomers.

The protein resides in the cytoplasm. The protein localises to the nucleoid. In Mycoplasma mycoides subsp. mycoides SC (strain CCUG 32753 / NCTC 10114 / PG1), this protein is Transcriptional regulator MraZ.